A 533-amino-acid polypeptide reads, in one-letter code: Suppressor of cytokine signaling 6 (533 aa).

2 disordered regions span residues 54-136 (CDIG…WPLR) and 177-199 (ELRDLQPEPRPESRCSPSSPGDL). Positions 59–69 (EDEKGKNRSKS) are enriched in basic and acidic residues. Over residues 76 to 88 (LKRRLSAKQKTKG) the composition is skewed to basic residues. The segment covering 177–189 (ELRDLQPEPRPES) has biased composition (basic and acidic residues). The region spanning 382–489 (WYWGPITRWE…TYPVRLTNPV (108 aa)) is the SH2 domain. The SOCS box domain maps to 484–533 (RLTNPVSRFMQVRSLQYLCRFVIRQYTRIDLIQKLPLPNKMKDYLQEKHY).

As to quaternary structure, interacts with KIT (phosphorylated). Interacts with RBCK1. Interacts with phosphorylated IRS4. Interacts with PIM3.

Its pathway is protein modification; protein ubiquitination. SOCS family proteins form part of a classical negative feedback system that regulates cytokine signal transduction. May be a substrate recognition component of a SCF-like ECS (Elongin BC-CUL2/5-SOCS-box protein) E3 ubiquitin-protein ligase complex which mediates the ubiquitination and subsequent proteasomal degradation of target proteins. Regulates KIT degradation by ubiquitination of the tyrosine-phosphorylated receptor. This is Suppressor of cytokine signaling 6 (Socs6) from Mus musculus (Mouse).